We begin with the raw amino-acid sequence, 185 residues long: Ribosome-recycling factor (185 aa).

This sequence belongs to the RRF family.

It is found in the cytoplasm. Its function is as follows. Responsible for the release of ribosomes from messenger RNA at the termination of protein biosynthesis. May increase the efficiency of translation by recycling ribosomes from one round of translation to another. This is Ribosome-recycling factor from Thermomicrobium roseum (strain ATCC 27502 / DSM 5159 / P-2).